A 335-amino-acid polypeptide reads, in one-letter code: Biotin synthase (335 aa).

The Radical SAM core domain maps to Thr-39 to Arg-267. The [4Fe-4S] cluster site is built by Cys-54, Cys-58, and Cys-61. Cys-98, Cys-130, Cys-190, and Arg-262 together coordinate [2Fe-2S] cluster.

Belongs to the radical SAM superfamily. Biotin synthase family. In terms of assembly, homodimer. It depends on [4Fe-4S] cluster as a cofactor. The cofactor is [2Fe-2S] cluster.

The catalysed reaction is (4R,5S)-dethiobiotin + (sulfur carrier)-SH + 2 reduced [2Fe-2S]-[ferredoxin] + 2 S-adenosyl-L-methionine = (sulfur carrier)-H + biotin + 2 5'-deoxyadenosine + 2 L-methionine + 2 oxidized [2Fe-2S]-[ferredoxin]. It participates in cofactor biosynthesis; biotin biosynthesis; biotin from 7,8-diaminononanoate: step 2/2. In terms of biological role, catalyzes the conversion of dethiobiotin (DTB) to biotin by the insertion of a sulfur atom into dethiobiotin via a radical-based mechanism. The sequence is that of Biotin synthase from Nostoc punctiforme (strain ATCC 29133 / PCC 73102).